Consider the following 356-residue polypeptide: Probable arabinogalactan endo-beta-1,4-galactanase A (356 aa).

Residues 1–21 form the signal peptide; sequence MLGKTVLLPLLVLLCHSLASA. N133 is a glycosylation site (N-linked (GlcNAc...) asparagine). Residue E157 is the Proton donor of the active site. The active-site Nucleophile is the E268.

The protein belongs to the glycosyl hydrolase 53 family.

The protein resides in the secreted. It catalyses the reaction The enzyme specifically hydrolyzes (1-&gt;4)-beta-D-galactosidic linkages in type I arabinogalactans.. In terms of biological role, endogalactanase involved in the degradation of plant cell wall polysaccharides, and more particularly of hairy regions of pectin. The polypeptide is Probable arabinogalactan endo-beta-1,4-galactanase A (galA) (Aspergillus fumigatus (strain ATCC MYA-4609 / CBS 101355 / FGSC A1100 / Af293) (Neosartorya fumigata)).